The sequence spans 335 residues: Phosphatidate cytidylyltransferase, mitochondrial (335 aa).

This sequence belongs to the TAM41 family. Mg(2+) serves as cofactor.

It is found in the mitochondrion inner membrane. The catalysed reaction is a 1,2-diacyl-sn-glycero-3-phosphate + CTP + H(+) = a CDP-1,2-diacyl-sn-glycerol + diphosphate. The protein operates within phospholipid metabolism; CDP-diacylglycerol biosynthesis; CDP-diacylglycerol from sn-glycerol 3-phosphate: step 3/3. In terms of biological role, catalyzes the conversion of phosphatidic acid (PA) to CDP-diacylglycerol (CDP-DAG), an essential intermediate in the synthesis of phosphatidylglycerol, cardiolipin and phosphatidylinositol. In Bos taurus (Bovine), this protein is Phosphatidate cytidylyltransferase, mitochondrial (TAMM41).